A 1302-amino-acid chain; its full sequence is Vascular endothelial growth factor receptor kdr-like (1302 aa).

Residues 1 to 28 (MTPLKTSVKAFFTLHVLFSCISHGLVEG) form the signal peptide. Residues 29-740 (SRLPDPQLLP…GEDGKPNIEV (712 aa)) are Extracellular-facing. 7 consecutive Ig-like C2-type domains span residues 34 to 115 (PQLL…HEVS), 143 to 206 (DPYF…VDNA), 222 to 318 (KNLA…TKVI), 326 to 412 (NVTH…ISYK), 419 to 542 (PKIF…FYVD), 545 to 636 (PQPF…SALT), and 643 to 728 (PWLM…AVIT). 2 disulfide bridges follow: Cys-55/Cys-104 and Cys-150/Cys-199. 2 N-linked (GlcNAc...) asparagine glycosylation sites follow: Asn-69 and Asn-97. 17 N-linked (GlcNAc...) asparagine glycosylation sites follow: Asn-242, Asn-265, Asn-291, Asn-326, Asn-370, Asn-380, Asn-408, Asn-453, Asn-466, Asn-505, Asn-517, Asn-532, Asn-607, Asn-611, Asn-630, Asn-648, and Asn-655. Cys-243 and Cys-302 form a disulfide bridge. Cysteines 444 and 524 form a disulfide. Residues Cys-565 and Cys-618 are joined by a disulfide bond. An intrachain disulfide couples Cys-664 to Cys-712. A helical membrane pass occupies residues 741–761 (IILVSTGAAATFLWIMLILFI). Residues 762–1302 (RKLRKPSSAD…YVVRYSTPPV (541 aa)) are Cytoplasmic-facing. The Protein kinase domain maps to 809–1139 (LRLGKTLGHG…ELVERLGDLL (331 aa)). Residues 815–823 (LGHGAFGKV) and Lys-843 each bind ATP. Residue Asp-1003 is the Proton acceptor of the active site. 3 positions are modified to phosphotyrosine; by autocatalysis: Tyr-1029, Tyr-1034, and Tyr-1150. Disordered regions lie at residues 1159-1179 (TKAD…PVSL) and 1266-1292 (PLVP…PDYN). Residues 1162-1176 (DPSNQSPTEETSTRP) are compositionally biased toward polar residues.

Belongs to the protein kinase superfamily. Tyr protein kinase family. CSF-1/PDGF receptor subfamily. As to quaternary structure, interacts with isoform VEGF165 of vegfaa and isoform VEGF171 of vegfab. In terms of processing, phosphorylated and activated by vegfaa and vegfab. As to expression, first expressed in embryos between 5- and 7-somites. At 7 somites, expressed in discrete bilateral stripes both anteriorly and posteriorly, and in a transverse ectodermal stripe in the hindbrain. From 7-somites, expression seems to extend caudally from the head, and in both directions in the trunk region, until by 20-somites, expression is detected as a continuous band from the anterior head region to the tailbud. Concurrently, cells expressing kdrl in the mid- and posterior trunk regions converge medially. By 24 hours post-fertilization (hpf), expressed in all the endothelial cells lining the vasculature.

It localises to the cell membrane. It carries out the reaction L-tyrosyl-[protein] + ATP = O-phospho-L-tyrosyl-[protein] + ADP + H(+). Its function is as follows. Receptor for VEGF or VEGFC. Has a tyrosine-protein kinase activity. Combinations of multiple VEGF receptors are required for development of different blood vessel types in the embryo. Involved in angiogenesis, specifically in VEGF-induced sprouting of new blood vessels. Particularly involved in artery formation. Does not appear to be required for hematopoiesis. This Danio rerio (Zebrafish) protein is Vascular endothelial growth factor receptor kdr-like (kdrl).